A 117-amino-acid polypeptide reads, in one-letter code: UPF0375 protein Y45F10C.2 (117 aa).

The first 20 residues, 1 to 20 (MNSFVSTVLLLSVTIALVSG), serve as a signal peptide directing secretion.

Belongs to the UPF0375 family. As to expression, expressed in the uterine epithelium.

It is found in the secreted. Functionally, negatively regulates the egg-laying rate by promoting retention of fertilized eggs. This is UPF0375 protein Y45F10C.2 from Caenorhabditis elegans.